The sequence spans 109 residues: MDMDLNNRLTEDETLEQAYDIFLELAADNLDPADIILFNLQFEERGGAELFDPSADWEEHVDYDLNPDFFAEVVIGLADTDGGEINDIFARVLLCREKDHKLCHILWRE.

This sequence belongs to the putative dsDNA mimic protein family.

May act as a double-stranded DNA (dsDNA) mimic. Probably regulates the activity of a dsDNA-binding protein. The protein is Putative double-stranded DNA mimic protein KPK_2119 of Klebsiella pneumoniae (strain 342).